We begin with the raw amino-acid sequence, 253 residues long: Proproteinase E (253 aa).

Residues 1–11 (FSQPFSRPSSR) constitute a propeptide, activation peptide. Positions 12 to 251 (VVNGEDAVPY…FIDWIDETIA (240 aa)) constitute a Peptidase S1 domain. Cystine bridges form between C41–C57, C100–C103, C140–C206, C171–C187, and C196–C227.

It belongs to the peptidase S1 family. Monomer. The zymogen is secreted as a ternary complex composed of procarboxypeptidase A, chymotrypsinogen C and proproteinase E. As to expression, pancreas.

It localises to the secreted. Its subcellular location is the extracellular space. Its function is as follows. May protect procarboxypeptidase A against denaturation in the acidic environment of the ruminant duodenum. The sequence is that of Proproteinase E from Bos taurus (Bovine).